The chain runs to 90 residues: uncharacterized protein (90 aa).

An N-terminal signal peptide occupies residues 1-20; that stretch reads MEKLFVLVFALTLLAFSSEA. The interval 31 to 50 is disordered; it reads QLLRSRRQDRPSKPGFPDEP.

It is found in the secreted. This is an uncharacterized protein from Rattus norvegicus (Rat).